The following is a 290-amino-acid chain: Dual-specificity RNA pseudouridine synthase RluF (290 aa).

One can recognise an S4 RNA-binding domain in the interval Val-7 to Leu-72. 2 interaction with RNA regions span residues Arg-105 to Lys-108 and Arg-187 to Arg-190. Asp-107 acts as the Nucleophile in catalysis. Residues Val-243 to Arg-290 are disordered. A compositionally biased stretch (basic and acidic residues) spans Val-261 to Gly-271.

Belongs to the pseudouridine synthase RsuA family. Monomer.

The enzyme catalyses uridine(2604) in 23S rRNA = pseudouridine(2604) in 23S rRNA. It carries out the reaction uridine(35) in tRNA(Tyr) = pseudouridine(35) in tRNA(Tyr). Functionally, dual specificity enzyme that catalyzes the synthesis of pseudouridine from uracil-2604 in 23S ribosomal RNA and from uracil-35 in the anticodon of tRNA(Tyr). Can, to a small extent, also react with uracil-2605. In Escherichia coli (strain K12), this protein is Dual-specificity RNA pseudouridine synthase RluF (rluF).